The sequence spans 141 residues: Large ribosomal subunit protein uL11 (141 aa).

This sequence belongs to the universal ribosomal protein uL11 family. In terms of assembly, part of the ribosomal stalk of the 50S ribosomal subunit. Interacts with L10 and the large rRNA to form the base of the stalk. L10 forms an elongated spine to which L12 dimers bind in a sequential fashion forming a multimeric L10(L12)X complex. In terms of processing, one or more lysine residues are methylated.

Its function is as follows. Forms part of the ribosomal stalk which helps the ribosome interact with GTP-bound translation factors. The sequence is that of Large ribosomal subunit protein uL11 from Sulfurimonas denitrificans (strain ATCC 33889 / DSM 1251) (Thiomicrospira denitrificans (strain ATCC 33889 / DSM 1251)).